We begin with the raw amino-acid sequence, 1368 residues long: Kinesin-like protein KIF24 (1368 aa).

An SAM domain is found at 1–64 (MASWLYECLC…FQLIKIIKIM (64 aa)). The disordered stretch occupies residues 89 to 112 (ELRSGPRRQLNFDSPADNKDRNAS). Phosphoserine occurs at positions 102 and 112. Residues 223–546 (KIRVCVRKRP…LRYADRVKEL (324 aa)) enclose the Kinesin motor domain. 313 to 320 (GQTGAGKT) serves as a coordination point for ATP. Phosphoserine is present on S478. The interaction with MPHOSPH9 stretch occupies residues 478–709 (SLLALKECIR…STKCKKVQTV (232 aa)). A compositionally biased stretch (polar residues) spans 557–576 (TSRNRTSGNSSPKRIQSSPG). Disordered regions lie at residues 557 to 584 (TSRN…DKCS) and 602 to 639 (GSTR…SPSQ). Residue S584 is modified to Phosphoserine. Phosphothreonine; by NEK2 is present on T621. S622 bears the Phosphoserine; by NEK2 mark. S646 is modified (phosphoserine). Disordered regions lie at residues 651–670 (TVRS…PLCS), 729–753 (HRAE…WTNI), 792–849 (QYRP…NTLE), 864–938 (GPEK…LAEK), and 952–984 (RGGG…EEDG). Positions 819 to 830 (QVEELDDSDFSE) are enriched in acidic residues. Residues S826 and S829 each carry the phosphoserine modification. Composition is skewed to polar residues over residues 839–849 (QRATKQRNTLE) and 871–881 (ERQQSLFSSPR). The span at 882-906 (TGDKKDLTKSWVDSRDPINHRRAAL) shows a compositional bias: basic and acidic residues. S1012 is subject to Phosphoserine. Disordered regions lie at residues 1054–1073 (MSLL…QLVQ) and 1086–1148 (GGPV…SREA). The segment covering 1106–1119 (SSATRHLWLSSSPP) has biased composition (polar residues). Over residues 1138 to 1148 (HPADKLPSREA) the composition is skewed to basic and acidic residues.

It belongs to the TRAFAC class myosin-kinesin ATPase superfamily. Kinesin family. Interacts with CCP110, CEP97, TALPID3. Interacts with MPHOSPH9.

Its subcellular location is the cytoplasm. It localises to the cytoskeleton. The protein localises to the microtubule organizing center. It is found in the centrosome. The protein resides in the centriole. Its function is as follows. Microtubule-dependent motor protein that acts as a negative regulator of ciliogenesis by mediating recruitment of CCP110 to mother centriole in cycling cells, leading to restrict nucleation of cilia at centrioles. Mediates depolymerization of microtubules of centriolar origin, possibly to suppress aberrant cilia formation. Following activation by NEK2 involved in disassembly of primary cilium during G2/M phase but does not disassemble fully formed ciliary axonemes. As cilium assembly and disassembly is proposed to coexist in a dynamic equilibrium may suppress nascent cilium assembly and, potentially, ciliar re-assembly in cells that have already disassembled their cilia ensuring the completion of cilium removal in the later stages of the cell cycle. Plays an important role in recruiting MPHOSPH9, a negative regulator of cilia formation to the distal end of mother centriole. This is Kinesin-like protein KIF24 (KIF24) from Homo sapiens (Human).